A 393-amino-acid chain; its full sequence is Lipid-A-disaccharide synthase (393 aa).

It belongs to the LpxB family.

It catalyses the reaction a lipid X + a UDP-2-N,3-O-bis[(3R)-3-hydroxyacyl]-alpha-D-glucosamine = a lipid A disaccharide + UDP + H(+). Its pathway is bacterial outer membrane biogenesis; LPS lipid A biosynthesis. Condensation of UDP-2,3-diacylglucosamine and 2,3-diacylglucosamine-1-phosphate to form lipid A disaccharide, a precursor of lipid A, a phosphorylated glycolipid that anchors the lipopolysaccharide to the outer membrane of the cell. The polypeptide is Lipid-A-disaccharide synthase (Actinobacillus pleuropneumoniae serotype 3 (strain JL03)).